A 157-amino-acid polypeptide reads, in one-letter code: Serine-protein kinase RsbW (157 aa).

The protein belongs to the anti-sigma-factor family.

The catalysed reaction is L-seryl-[protein] + ATP = O-phospho-L-seryl-[protein] + ADP + H(+). The enzyme catalyses L-threonyl-[protein] + ATP = O-phospho-L-threonyl-[protein] + ADP + H(+). Negative regulator of sigma-B activity. Phosphorylates and inactivates its specific antagonist protein, RsbV. Upon phosphorylation of RsbV, RsbW is released and binds to sigma-B, thereby blocking its ability to form an RNA polymerase holoenzyme (E-sigma-B). This Listeria innocua serovar 6a (strain ATCC BAA-680 / CLIP 11262) protein is Serine-protein kinase RsbW.